The chain runs to 322 residues: Pilin gene-inverting protein (322 aa).

Functionally, may be the site-specific invertase required for pilin gene inversion. Moraxella can express either a Q or I pilin; the inversion of 2 kb of DNA determines which pilin is expressed. The sequence is that of Pilin gene-inverting protein (piv) from Moraxella bovis.